A 168-amino-acid polypeptide reads, in one-letter code: MSQTVHFQGNPVTVANSIPQAGSKAQTFTLVAKDLSDVTLGQFAGKRKVLNIFPSIDTGVCAASVRKFNQLATEIDNTVVLCISADLPFAQSRFCGAEGLNNVITLSTFRNAEFLQAYGVAIADGPLKGLAARAVVVIDENDNVIFSQLVDEITTEPDYEAALAVLKA.

A Thioredoxin domain is found at 19-168 (PQAGSKAQTF…YEAALAVLKA (150 aa)). Catalysis depends on cysteine 61, which acts as the Cysteine sulfenic acid (-SOH) intermediate. A disulfide bond links cysteine 61 and cysteine 95.

This sequence belongs to the peroxiredoxin family. Tpx subfamily. As to quaternary structure, homodimer.

The enzyme catalyses a hydroperoxide + [thioredoxin]-dithiol = an alcohol + [thioredoxin]-disulfide + H2O. Thiol-specific peroxidase that catalyzes the reduction of hydrogen peroxide and organic hydroperoxides to water and alcohols, respectively. Plays a role in cell protection against oxidative stress by detoxifying peroxides. This chain is Thiol peroxidase, found in Shigella dysenteriae.